The following is a 156-amino-acid chain: Small ribosomal subunit protein uS7 (156 aa).

It belongs to the universal ribosomal protein uS7 family. As to quaternary structure, part of the 30S ribosomal subunit. Contacts proteins S9 and S11.

Its function is as follows. One of the primary rRNA binding proteins, it binds directly to 16S rRNA where it nucleates assembly of the head domain of the 30S subunit. Is located at the subunit interface close to the decoding center, probably blocks exit of the E-site tRNA. In Xanthobacter autotrophicus (strain ATCC BAA-1158 / Py2), this protein is Small ribosomal subunit protein uS7.